A 200-amino-acid polypeptide reads, in one-letter code: dITP/XTP pyrophosphatase (200 aa).

7–12 (SNNRGK) is a binding site for substrate. Catalysis depends on aspartate 68, which acts as the Proton acceptor. Residue aspartate 68 participates in Mg(2+) binding. Substrate-binding positions include alanine 69, 154-157 (FGFD), lysine 177, and 182-183 (HR).

It belongs to the HAM1 NTPase family. As to quaternary structure, homodimer. Mg(2+) serves as cofactor.

It catalyses the reaction XTP + H2O = XMP + diphosphate + H(+). The enzyme catalyses dITP + H2O = dIMP + diphosphate + H(+). The catalysed reaction is ITP + H2O = IMP + diphosphate + H(+). In terms of biological role, pyrophosphatase that catalyzes the hydrolysis of nucleoside triphosphates to their monophosphate derivatives, with a high preference for the non-canonical purine nucleotides XTP (xanthosine triphosphate), dITP (deoxyinosine triphosphate) and ITP. Seems to function as a house-cleaning enzyme that removes non-canonical purine nucleotides from the nucleotide pool, thus preventing their incorporation into DNA/RNA and avoiding chromosomal lesions. The sequence is that of dITP/XTP pyrophosphatase from Delftia acidovorans (strain DSM 14801 / SPH-1).